The sequence spans 312 residues: Malate dehydrogenase (312 aa).

NAD(+)-binding positions include 12–17 and aspartate 36; that span reads GAGFTG. Substrate is bound by residues arginine 87 and arginine 93. Residues asparagine 100 and 123 to 125 each bind NAD(+); that span reads LTN. Asparagine 125 lines the substrate pocket. At serine 149 the chain carries Phosphoserine. A substrate-binding site is contributed by arginine 156. The active-site Proton acceptor is the histidine 180.

Belongs to the LDH/MDH superfamily. MDH type 3 family. In terms of assembly, homotetramer.

The catalysed reaction is (S)-malate + NAD(+) = oxaloacetate + NADH + H(+). Functionally, catalyzes the reversible oxidation of malate to oxaloacetate. This is Malate dehydrogenase from Bacillus israeli.